The chain runs to 639 residues: Protein argonaute (639 aa).

An N-terminal domain region spans residues Met1–Asp100. A linker L1 region spans residues Phe101–Ser153. Positions Lys154–Thr209 are PAZ domain. A linker L2 region spans residues Thr210–Pro292. A mid domain region spans residues Leu293 to Pro424. The segment at Glu425 to Tyr639 is PIWI domain. Active-site residues include Asp446, Glu482, Asp516, and Asn624. Mn(2+) is bound at residue Asp446. Residues Asp516 and Asn624 each coordinate Mn(2+).

Belongs to the argonaute family. Long pAgo subfamily. It depends on Mn(2+) as a cofactor.

Its subcellular location is the cytoplasm. An RNA-guided ssDNA endonuclease that may play a role in defense against invading mobile genetic elements. Uses short 5'-OH-ssRNA sequences as guides (gRNA) to bind complementary target DNA (tDNA) or target RNA resulting in target cleavage. The cleavage site is 10 nucleotides (nt) downstream of the target residue base-paired with the 5'-end of the gRNA. Reaction rates are fastest on 5'-OH-gRNA:tDNA followed by 5'-OH-gRNA:target RNA. gRNA between 17-21 nt supports equivalent rates of cleavage, has no preferred 5'-nt. Has weak activity on tDNA with 5'-phospho-gRNA, yielding products 1-2 nt longer. Unlike other characterized prokaryotic Ago proteins symmetric mismatches centered around the cleavage site reduce cleavage efficiency. In Marinitoga piezophila (strain DSM 14283 / JCM 11233 / KA3), this protein is Protein argonaute.